The chain runs to 791 residues: Cullin-2 (791 aa).

In terms of domain architecture, Cullin neddylation spans 722-784 (DRKYYMECAI…KMYIQRTDQN (63 aa)). Residue K736 forms a Glycyl lysine isopeptide (Lys-Gly) (interchain with G-Cter in NEDD8) linkage.

It belongs to the cullin family. Component of multiple CBC (Cul2-ElonginB-ElonginC) E3 ubiquitin-protein ligase complexes formed of cul-2, elb-1, elc-1, rbx-1 and a variable substrate recognition component. Component of the CBC(fem-1) E3 ubiquitin-protein ligase complex with fem-1, fem-2 and fem-3. The CBC(fem-1) complex interacts with tra-1 and promotes tra-1 degradation. Probable component of the CBC(lrr-1) E3 ubiquitin-protein ligase complex incuding cul-2, elb-1, elc-1, rbx-1 and lrr-1. The CBC(lrr-1) complex interacts with the DNA replisome complex at the end of S phase; the interaction promotes the release of components of the CMG helicase complex (a component of the replisome) from chromatin. Probable component of an CBC(zif-1) E3 ubiquitin-protein ligase including cul-2, elc-1, rbx-1 and zif-1. Part of an E3 ubiquitin-protein ligase complex including cul-2, elc-1 and zyg-11. Interacts with Skp1-related protein skr-10. In terms of processing, neddylated; which enhances the ubiquitination activity of CBC (Cul2-ElonginB-ElonginC) E3 ubiquitin-protein ligase complexes. In adults, highly expressed in meiotic cells and oocytes. In larvae, expressed in many proliferating cell types: P cells during the L1 stage; seam cells when they divide at every molt; vulval and somatic gonad cells in late L3 and L4 stages; and intestinal cells throughout larval development.

The protein localises to the cytoplasm. It is found in the nucleus. It functions in the pathway protein modification; protein ubiquitination. Core component of multiple cullin-RING-based CBC (Cul2-ElonginB-ElonginC) E3 ubiquitin-protein ligase complexes which mediate the ubiquitination and subsequent proteasomal degradation of target proteins. As a scaffold protein may contribute to catalysis through positioning of the substrate and the ubiquitin-conjugating enzyme. The functional specificity of the CBC complex depends on the variable substrate recognition component. May function in ubiquitin-mediated degradation of CKIs to target cki-1 for degradation. CBC(zif-1) may ensure germline precursor cell asymmetry by targeting germline proteins for destruction if expressed in non-germline cells. As part of the CBC(fem-1) complex directs ubiquitination of tra-1. As part of the CBC(lrr-1) complex, required for the ubiquitination and dissasembly of the CMG helicase complex from chromatin at the end of DNA replication. Positive cell-cycle regulator that is required at two distinct points in the cell cycle; the G1-to-S-phase transition and mitosis. Also required for proper cytoskeletal movement and mitotic chromosome condensation. This chain is Cullin-2, found in Caenorhabditis elegans.